The following is a 66-amino-acid chain: Putative antitoxin APE_0279a.1 (66 aa).

This sequence belongs to the UPF0165 family.

In terms of biological role, possibly the antitoxin component of a type II toxin-antitoxin (TA) system. This chain is Putative antitoxin APE_0279a.1, found in Aeropyrum pernix (strain ATCC 700893 / DSM 11879 / JCM 9820 / NBRC 100138 / K1).